The sequence spans 445 residues: E3 ubiquitin-protein ligase MYLIP (445 aa).

Positions 1–279 (MLCYVTRPDA…ETHAFYRCDT (279 aa)) constitute an FERM domain. The segment at 341–363 (RNDQSPPSSPLKSSDSSMSCSSC) is disordered. Residues 350–363 (PLKSSDSSMSCSSC) are compositionally biased toward low complexity. The Fe cation site is built by Cys360, Cys363, and Cys368. An RING-type zinc finger spans residues 387–422 (CMVCCEEEINSTFCPCGHTVCCESCAAQLQSCPVCR). The critical for homodimerization stretch occupies residues 431–433 (VYL).

In terms of assembly, homodimer. Interacts with the E2 ubiquitin-conjugating enzyme, UBE2D1 (via RING-type zinc finger). Interacts with myosin regulatory light chain (MRLC) and TMEM4. Post-translationally, autoubiquitinated. In terms of tissue distribution, expressed in developing and adult brain, hippocampus, cerebellum, cerebral cortex, thalamus and substantia nigra. Predominantly found in neurons.

It is found in the cytoplasm. The protein localises to the cell membrane. It catalyses the reaction S-ubiquitinyl-[E2 ubiquitin-conjugating enzyme]-L-cysteine + [acceptor protein]-L-lysine = [E2 ubiquitin-conjugating enzyme]-L-cysteine + N(6)-ubiquitinyl-[acceptor protein]-L-lysine.. It participates in protein modification; protein ubiquitination. Its activity is regulated as follows. Can bind 1 iron ion per dimer. Iron binding seems to decrease LDLR degradation activity. In terms of biological role, E3 ubiquitin-protein ligase that mediates ubiquitination and subsequent proteasomal degradation of myosin regulatory light chain (MRLC), LDLR, VLDLR and LRP8. Activity depends on E2 enzymes of the UBE2D family. Proteasomal degradation of MRLC leads to inhibit neurite outgrowth in presence of NGF by counteracting the stabilization of MRLC by saposin-like protein (CNPY2/MSAP) and reducing CNPY2-stimulated neurite outgrowth. Acts as a sterol-dependent inhibitor of cellular cholesterol uptake by mediating ubiquitination and subsequent degradation of LDLR. The chain is E3 ubiquitin-protein ligase MYLIP (Mylip) from Rattus norvegicus (Rat).